A 77-amino-acid polypeptide reads, in one-letter code: ATP synthase subunit c (77 aa).

2 helical membrane passes run 13–33 (IATVGYGLAAIGPGIGVGIVA) and 55–75 (FLGIAFSEALALIGLATYFIF).

Belongs to the ATPase C chain family. F-type ATPases have 2 components, F(1) - the catalytic core - and F(0) - the membrane proton channel. F(1) has five subunits: alpha(3), beta(3), gamma(1), delta(1), epsilon(1). F(0) has three main subunits: a(1), b(2) and c(10-14). The alpha and beta chains form an alternating ring which encloses part of the gamma chain. F(1) is attached to F(0) by a central stalk formed by the gamma and epsilon chains, while a peripheral stalk is formed by the delta and b chains.

Its subcellular location is the cell membrane. In terms of biological role, f(1)F(0) ATP synthase produces ATP from ADP in the presence of a proton or sodium gradient. F-type ATPases consist of two structural domains, F(1) containing the extramembraneous catalytic core and F(0) containing the membrane proton channel, linked together by a central stalk and a peripheral stalk. During catalysis, ATP synthesis in the catalytic domain of F(1) is coupled via a rotary mechanism of the central stalk subunits to proton translocation. Its function is as follows. Key component of the F(0) channel; it plays a direct role in translocation across the membrane. A homomeric c-ring of between 10-14 subunits forms the central stalk rotor element with the F(1) delta and epsilon subunits. In Clavibacter sepedonicus (Clavibacter michiganensis subsp. sepedonicus), this protein is ATP synthase subunit c.